The primary structure comprises 627 residues: Phosphomethylpyrimidine synthase (627 aa).

Residues 1–21 are compositionally biased toward polar residues; it reads MSAQQQKNLSESAQVDQQSVQ. Residues 1 to 32 are disordered; the sequence is MSAQQQKNLSESAQVDQQSVQPFPRSQKVYVQ. Substrate-binding positions include asparagine 231, methionine 260, tyrosine 289, histidine 325, 345 to 347, 386 to 389, and glutamate 425; these read SRG and DGLR. Residue histidine 429 participates in Zn(2+) binding. Position 452 (tyrosine 452) interacts with substrate. Histidine 493 provides a ligand contact to Zn(2+). 3 residues coordinate [4Fe-4S] cluster: cysteine 573, cysteine 576, and cysteine 581.

The protein belongs to the ThiC family. As to quaternary structure, homodimer. The cofactor is [4Fe-4S] cluster.

The catalysed reaction is 5-amino-1-(5-phospho-beta-D-ribosyl)imidazole + S-adenosyl-L-methionine = 4-amino-2-methyl-5-(phosphooxymethyl)pyrimidine + CO + 5'-deoxyadenosine + formate + L-methionine + 3 H(+). Its pathway is cofactor biosynthesis; thiamine diphosphate biosynthesis. In terms of biological role, catalyzes the synthesis of the hydroxymethylpyrimidine phosphate (HMP-P) moiety of thiamine from aminoimidazole ribotide (AIR) in a radical S-adenosyl-L-methionine (SAM)-dependent reaction. This chain is Phosphomethylpyrimidine synthase, found in Ectopseudomonas mendocina (strain ymp) (Pseudomonas mendocina).